Consider the following 321-residue polypeptide: GTP cyclohydrolase FolE2 (321 aa).

This sequence belongs to the GTP cyclohydrolase IV family.

It catalyses the reaction GTP + H2O = 7,8-dihydroneopterin 3'-triphosphate + formate + H(+). It participates in cofactor biosynthesis; 7,8-dihydroneopterin triphosphate biosynthesis; 7,8-dihydroneopterin triphosphate from GTP: step 1/1. In terms of biological role, converts GTP to 7,8-dihydroneopterin triphosphate. The polypeptide is GTP cyclohydrolase FolE2 (Paracoccus denitrificans (strain Pd 1222)).